Consider the following 263-residue polypeptide: Hydroxyacylglutathione hydrolase (263 aa).

Residues His-56, His-58, Asp-60, His-61, His-115, Asp-135, and His-175 each contribute to the Zn(2+) site.

This sequence belongs to the metallo-beta-lactamase superfamily. Glyoxalase II family. As to quaternary structure, monomer. The cofactor is Zn(2+).

The enzyme catalyses an S-(2-hydroxyacyl)glutathione + H2O = a 2-hydroxy carboxylate + glutathione + H(+). The protein operates within secondary metabolite metabolism; methylglyoxal degradation; (R)-lactate from methylglyoxal: step 2/2. Thiolesterase that catalyzes the hydrolysis of S-D-lactoyl-glutathione to form glutathione and D-lactic acid. This is Hydroxyacylglutathione hydrolase from Polaromonas sp. (strain JS666 / ATCC BAA-500).